The sequence spans 601 residues: Elongation factor 4 (601 aa).

The 183-residue stretch at 2-184 (DLIRNFSIIA…EMIARVPPPT (183 aa)) folds into the tr-type G domain. Residues 14-19 (DHGKST) and 131-134 (NKID) contribute to the GTP site.

The protein belongs to the TRAFAC class translation factor GTPase superfamily. Classic translation factor GTPase family. LepA subfamily.

It is found in the cell inner membrane. It carries out the reaction GTP + H2O = GDP + phosphate + H(+). Functionally, required for accurate and efficient protein synthesis under certain stress conditions. May act as a fidelity factor of the translation reaction, by catalyzing a one-codon backward translocation of tRNAs on improperly translocated ribosomes. Back-translocation proceeds from a post-translocation (POST) complex to a pre-translocation (PRE) complex, thus giving elongation factor G a second chance to translocate the tRNAs correctly. Binds to ribosomes in a GTP-dependent manner. This chain is Elongation factor 4, found in Polynucleobacter asymbioticus (strain DSM 18221 / CIP 109841 / QLW-P1DMWA-1) (Polynucleobacter necessarius subsp. asymbioticus).